The primary structure comprises 251 residues: Triosephosphate isomerase (251 aa).

9-11 (NWK) is a binding site for substrate. Histidine 95 functions as the Electrophile in the catalytic mechanism. Glutamate 167 acts as the Proton acceptor in catalysis. Substrate is bound by residues glycine 173, serine 212, and 233–234 (GG).

This sequence belongs to the triosephosphate isomerase family. Homodimer.

The protein localises to the cytoplasm. The catalysed reaction is D-glyceraldehyde 3-phosphate = dihydroxyacetone phosphate. It participates in carbohydrate biosynthesis; gluconeogenesis. It functions in the pathway carbohydrate degradation; glycolysis; D-glyceraldehyde 3-phosphate from glycerone phosphate: step 1/1. Functionally, involved in the gluconeogenesis. Catalyzes stereospecifically the conversion of dihydroxyacetone phosphate (DHAP) to D-glyceraldehyde-3-phosphate (G3P). In Pseudomonas syringae pv. tomato (strain ATCC BAA-871 / DC3000), this protein is Triosephosphate isomerase.